We begin with the raw amino-acid sequence, 162 residues long: EF-hand calcium-binding domain-containing protein 11 (162 aa).

3 EF-hand domains span residues 18–53, 91–126, and 127–162; these read SERR…LFGY, LYRN…VAPK, and LPSR…GKAK. The Ca(2+) site is built by D140, D142, D144, H146, and D151.

In Rattus norvegicus (Rat), this protein is EF-hand calcium-binding domain-containing protein 11 (Efcab11).